The following is a 380-amino-acid chain: Cytochrome b (380 aa).

4 helical membrane-spanning segments follow: residues 34-54 (FGSL…LLAA), 78-99 (WLIR…YMHI), 114-134 (WNTG…GYVL), and 179-199 (FFTL…IHLT). Heme b-binding residues include His84 and His98. Positions 183 and 197 each coordinate heme b. Position 202 (His202) interacts with a ubiquinone. Helical transmembrane passes span 227–247 (LKDT…ALFS), 289–309 (LGGV…PLLH), 321–341 (LSQL…WVGS), and 348–368 (FIII…ILFP).

This sequence belongs to the cytochrome b family. As to quaternary structure, the cytochrome bc1 complex contains 11 subunits: 3 respiratory subunits (MT-CYB, CYC1 and UQCRFS1), 2 core proteins (UQCRC1 and UQCRC2) and 6 low-molecular weight proteins (UQCRH/QCR6, UQCRB/QCR7, UQCRQ/QCR8, UQCR10/QCR9, UQCR11/QCR10 and a cleavage product of UQCRFS1). This cytochrome bc1 complex then forms a dimer. It depends on heme b as a cofactor.

It is found in the mitochondrion inner membrane. In terms of biological role, component of the ubiquinol-cytochrome c reductase complex (complex III or cytochrome b-c1 complex) that is part of the mitochondrial respiratory chain. The b-c1 complex mediates electron transfer from ubiquinol to cytochrome c. Contributes to the generation of a proton gradient across the mitochondrial membrane that is then used for ATP synthesis. The polypeptide is Cytochrome b (MT-CYB) (Balearica regulorum (Grey crowned-crane)).